The primary structure comprises 564 residues: 3beta-hydroxysteroid-dehydrogenase/decarboxylase isoform 2 (564 aa).

Residue 16–21 (GGRGFA) participates in NAD(+) binding. Residues Asn-146 and Asn-158 are each glycosylated (N-linked (GlcNAc...) asparagine). NAD(+) contacts are provided by Tyr-161 and Lys-165. The active-site Proton donor is Lys-165. Residues 384–564 (VADTLLWKDL…EKLFGSKKHD (181 aa)) enclose the Reticulon domain. Helical transmembrane passes span 398–418 (IAIF…STVV) and 424–444 (ALLV…KIFG). Asn-474 is a glycosylation site (N-linked (GlcNAc...) asparagine). Helical transmembrane passes span 486–506 (GNDW…SLAG) and 507–527 (AISL…AFLV).

The protein belongs to the 3-beta-HSD family.

It is found in the endoplasmic reticulum membrane. The catalysed reaction is a 3beta-hydroxysteroid-4alpha-carboxylate + NAD(+) = a 3-oxosteroid + CO2 + NADH. It carries out the reaction 4alpha-carboxy-4beta,14alpha-dimethyl-9beta,19-cyclo-5alpha-ergost-24(24(1))-en-3beta-ol + NAD(+) = cycloeucalenone + CO2 + NADH. The protein operates within steroid biosynthesis; zymosterol biosynthesis; zymosterol from lanosterol: step 4/6. 3beta-hydroxysteroid-dehydrogenase/decarboxylase involved in sterol synthesis. Catalyzes the formation of 3-oxosteroids from 3beta-hydroxysteroids-4alpha-carboxylate. Involved in the regulation of inflorescence internodes and leaves growth, probably by affecting auxin transporter activity possibly by altering sterol composition in the membranes. In Arabidopsis thaliana (Mouse-ear cress), this protein is 3beta-hydroxysteroid-dehydrogenase/decarboxylase isoform 2.